A 91-amino-acid polypeptide reads, in one-letter code: Small ribosomal subunit protein uS19 (91 aa).

The protein belongs to the universal ribosomal protein uS19 family.

Protein S19 forms a complex with S13 that binds strongly to the 16S ribosomal RNA. The protein is Small ribosomal subunit protein uS19 of Synechococcus sp. (strain CC9311).